Consider the following 393-residue polypeptide: Acyl-homoserine-lactone synthase OpaM (393 aa).

This sequence belongs to the LuxM / VanM family.

The enzyme catalyses a fatty acyl-[ACP] + S-adenosyl-L-methionine = an N-acyl-L-homoserine lactone + S-methyl-5'-thioadenosine + holo-[ACP] + H(+). This is Acyl-homoserine-lactone synthase OpaM (opaM) from Vibrio parahaemolyticus serotype O3:K6 (strain RIMD 2210633).